A 785-amino-acid polypeptide reads, in one-letter code: Endonuclease MutS2 (785 aa).

An ATP-binding site is contributed by 331–338 (GPNTGGKT). Residues 710-785 (LDLRGLYADE…GLGVTVVELA (76 aa)) form the Smr domain.

This sequence belongs to the DNA mismatch repair MutS family. MutS2 subfamily. As to quaternary structure, homodimer. Binds to stalled ribosomes, contacting rRNA.

Endonuclease that is involved in the suppression of homologous recombination and thus may have a key role in the control of bacterial genetic diversity. Functionally, acts as a ribosome collision sensor, splitting the ribosome into its 2 subunits. Detects stalled/collided 70S ribosomes which it binds and splits by an ATP-hydrolysis driven conformational change. Acts upstream of the ribosome quality control system (RQC), a ribosome-associated complex that mediates the extraction of incompletely synthesized nascent chains from stalled ribosomes and their subsequent degradation. Probably generates substrates for RQC. In Pelotomaculum thermopropionicum (strain DSM 13744 / JCM 10971 / SI), this protein is Endonuclease MutS2.